A 658-amino-acid chain; its full sequence is Glycogen debranching enzyme (658 aa).

Asp-336 serves as the catalytic Nucleophile. Residue Glu-371 is the Proton donor of the active site. Positions 459–484 (EANGEENRDGTNSNYSDNHGKEGLGG) are disordered.

The protein belongs to the glycosyl hydrolase 13 family.

The enzyme catalyses Hydrolysis of (1-&gt;6)-alpha-D-glucosidic linkages to branches with degrees of polymerization of three or four glucose residues in limit dextrin.. Its pathway is glycan degradation; glycogen degradation. Functionally, removes maltotriose and maltotetraose chains that are attached by 1,6-alpha-linkage to the limit dextrin main chain, generating a debranched limit dextrin. This chain is Glycogen debranching enzyme, found in Salmonella paratyphi B (strain ATCC BAA-1250 / SPB7).